The following is a 629-amino-acid chain: 1-deoxy-D-xylulose-5-phosphate synthase (629 aa).

Residues His-72 and 113–115 (GHS) contribute to the thiamine diphosphate site. Residue Asp-144 participates in Mg(2+) binding. Thiamine diphosphate contacts are provided by residues 145 to 146 (GA), Asn-173, Tyr-284, and Glu-366. Mg(2+) is bound at residue Asn-173.

The protein belongs to the transketolase family. DXPS subfamily. In terms of assembly, homodimer. The cofactor is Mg(2+). Requires thiamine diphosphate as cofactor.

The catalysed reaction is D-glyceraldehyde 3-phosphate + pyruvate + H(+) = 1-deoxy-D-xylulose 5-phosphate + CO2. It participates in metabolic intermediate biosynthesis; 1-deoxy-D-xylulose 5-phosphate biosynthesis; 1-deoxy-D-xylulose 5-phosphate from D-glyceraldehyde 3-phosphate and pyruvate: step 1/1. Its function is as follows. Catalyzes the acyloin condensation reaction between C atoms 2 and 3 of pyruvate and glyceraldehyde 3-phosphate to yield 1-deoxy-D-xylulose-5-phosphate (DXP). The protein is 1-deoxy-D-xylulose-5-phosphate synthase of Halalkalibacterium halodurans (strain ATCC BAA-125 / DSM 18197 / FERM 7344 / JCM 9153 / C-125) (Bacillus halodurans).